The following is a 282-amino-acid chain: Pantothenate synthetase (282 aa).

Met30–His37 provides a ligand contact to ATP. The active-site Proton donor is the His37. Gln61 is a binding site for (R)-pantoate. Gln61 contributes to the beta-alanine binding site. Gly149–Asp152 lines the ATP pocket. Gln155 provides a ligand contact to (R)-pantoate. ATP is bound by residues Ile178 and Met186–Arg189.

It belongs to the pantothenate synthetase family. In terms of assembly, homodimer.

It is found in the cytoplasm. The catalysed reaction is (R)-pantoate + beta-alanine + ATP = (R)-pantothenate + AMP + diphosphate + H(+). It functions in the pathway cofactor biosynthesis; (R)-pantothenate biosynthesis; (R)-pantothenate from (R)-pantoate and beta-alanine: step 1/1. Its function is as follows. Catalyzes the condensation of pantoate with beta-alanine in an ATP-dependent reaction via a pantoyl-adenylate intermediate. The chain is Pantothenate synthetase from Shewanella loihica (strain ATCC BAA-1088 / PV-4).